The chain runs to 341 residues: MTTQQPVAVLGGGSFGTAIANLLAENGHQVRQWMRDPEQAEAIRVNRENPRYLKGIRIRPEVEPVTDLTAVLDASELIFVALPSSALRSVLSPHVARLNGKMLVSLTKGIEAQSFKLMSQILEEIVPQARIGVLSGPNLAREIAEHALTATVVASEDEALCQEVQAALHGRTFRVYASNDRFGVELGGALKNVYAIIAGMAVALDMGENTKSMLITRALAEMTRFAVSQGANPMTFLGLAGVGDLIVTCSSPKSRNYQVGFALGQGLTLDEAVTRLGEVAEGVNTLKVLKVKAQEVQVYMPLVAGLHAILFEGRTLSQVIEALMRAEPKTDVDFISITGFN.

Residues Ser14, Phe15, Arg35, and Lys108 each contribute to the NADPH site. Residues Lys108 and Gly136 each coordinate sn-glycerol 3-phosphate. Ala140 serves as a coordination point for NADPH. Sn-glycerol 3-phosphate-binding residues include Lys191, Asp244, Ser254, Arg255, and Asn256. The active-site Proton acceptor is Lys191. Arg255 contacts NADPH. Val279 and Glu281 together coordinate NADPH.

This sequence belongs to the NAD-dependent glycerol-3-phosphate dehydrogenase family.

It localises to the cytoplasm. The enzyme catalyses sn-glycerol 3-phosphate + NAD(+) = dihydroxyacetone phosphate + NADH + H(+). It carries out the reaction sn-glycerol 3-phosphate + NADP(+) = dihydroxyacetone phosphate + NADPH + H(+). It participates in membrane lipid metabolism; glycerophospholipid metabolism. Its function is as follows. Catalyzes the reduction of the glycolytic intermediate dihydroxyacetone phosphate (DHAP) to sn-glycerol 3-phosphate (G3P), the key precursor for phospholipid synthesis. This is Glycerol-3-phosphate dehydrogenase [NAD(P)+] from Pseudomonas syringae pv. syringae (strain B728a).